Consider the following 493-residue polypeptide: L-arabinose isomerase 1 (493 aa).

Positions 301, 326, 343, and 442 each coordinate Mn(2+).

Belongs to the arabinose isomerase family. It depends on Mn(2+) as a cofactor.

It carries out the reaction beta-L-arabinopyranose = L-ribulose. It functions in the pathway carbohydrate degradation; L-arabinose degradation via L-ribulose; D-xylulose 5-phosphate from L-arabinose (bacterial route): step 1/3. Catalyzes the conversion of L-arabinose to L-ribulose. This chain is L-arabinose isomerase 1, found in Bacillus licheniformis (strain ATCC 14580 / DSM 13 / JCM 2505 / CCUG 7422 / NBRC 12200 / NCIMB 9375 / NCTC 10341 / NRRL NRS-1264 / Gibson 46).